The chain runs to 122 residues: Large ribosomal subunit protein uL14 (122 aa).

Belongs to the universal ribosomal protein uL14 family. As to quaternary structure, part of the 50S ribosomal subunit. Forms a cluster with proteins L3 and L19. In the 70S ribosome, L14 and L19 interact and together make contacts with the 16S rRNA in bridges B5 and B8.

In terms of biological role, binds to 23S rRNA. Forms part of two intersubunit bridges in the 70S ribosome. The sequence is that of Large ribosomal subunit protein uL14 from Campylobacter lari (strain RM2100 / D67 / ATCC BAA-1060).